A 148-amino-acid polypeptide reads, in one-letter code: MQVPVMLLGLLFTVAGWSIHVLAQPDAVNAPLTCCYSFTSKMIPMSRLESYKRITSSRCPKEAVVFVTKLKREVCADPKKEWVQTYIKNLDRNQMRSEPTTLFKTASALRSSAPLNVKLTRKSEANASTTFSTTTSSTSVGVTSVTVN.

Positions 1–23 (MQVPVMLLGLLFTVAGWSIHVLA) are cleaved as a signal peptide. Glutamine 24 carries the pyrrolidone carboxylic acid modification. 2 cysteine pairs are disulfide-bonded: cysteine 34/cysteine 59 and cysteine 35/cysteine 75. An N-linked (GlcNAc...) asparagine glycan is attached at asparagine 126.

This sequence belongs to the intercrine beta (chemokine CC) family. Monomer or homodimer; in equilibrium. Is tethered on endothelial cells by glycosaminoglycan (GAG) side chains of proteoglycans. Interacts with TNFAIP6 (via Link domain). Post-translationally, processing at the N-terminus can regulate receptor and target cell selectivity. Deletion of the N-terminal residue converts it from an activator of basophil to an eosinophil chemoattractant. N-Glycosylated.

It is found in the secreted. In terms of biological role, acts as a ligand for C-C chemokine receptor CCR2. Signals through binding and activation of CCR2 and induces a strong chemotactic response and mobilization of intracellular calcium ions. Exhibits a chemotactic activity for monocytes and basophils but not neutrophils or eosinophils. Plays an important role in mediating peripheral nerve injury-induced neuropathic pain. Increases NMDA-mediated synaptic transmission in both dopamine D1 and D2 receptor-containing neurons, which may be caused by MAPK/ERK-dependent phosphorylation of GRIN2B/NMDAR2B. The protein is C-C motif chemokine 2 (Ccl2) of Mus musculus (Mouse).